The following is a 218-amino-acid chain: Riboflavin kinase (218 aa).

The segment at 1 to 27 is disordered; sequence MRPDGPRDPVAGPDSGPEPPYPVRLSG. Thr44 and Asn46 together coordinate Mg(2+). Residue Glu120 is the Nucleophile of the active site.

This sequence belongs to the flavokinase family. Zn(2+) serves as cofactor. Requires Mg(2+) as cofactor.

It carries out the reaction riboflavin + ATP = FMN + ADP + H(+). The protein operates within cofactor biosynthesis; FMN biosynthesis; FMN from riboflavin (ATP route): step 1/1. Functionally, catalyzes the phosphorylation of riboflavin (vitamin B2) to form flavin mononucleotide (FMN) coenzyme. The protein is Riboflavin kinase (fmn1) of Neosartorya fischeri (strain ATCC 1020 / DSM 3700 / CBS 544.65 / FGSC A1164 / JCM 1740 / NRRL 181 / WB 181) (Aspergillus fischerianus).